Here is a 1076-residue protein sequence, read N- to C-terminus: Regulator of G-protein signaling protein-like (1076 aa).

Positions 645-764 (NLTEVLLNTQ…LFPPHHQEVE (120 aa)) constitute an RGS domain. Positions 834–852 (TTAHNTSGRSAPPSTNVRS) are enriched in polar residues. A disordered region spans residues 834–854 (TTAHNTSGRSAPPSTNVRSAD). The chain crosses the membrane as a helical span at residues 960-982 (VFHGAIMSVFPVVMYFWKRFCFW).

Its subcellular location is the membrane. The sequence is that of Regulator of G-protein signaling protein-like (RGSL1) from Homo sapiens (Human).